A 341-amino-acid polypeptide reads, in one-letter code: GTP-binding protein REM 2 (341 aa).

The span at 1–13 (MHTDLDTDMDADT) shows a compositional bias: acidic residues. 2 disordered regions span residues 1–72 (MHTD…SMPV) and 84–106 (VDEL…GSGE). Polar residues predominate over residues 18–32 (LCSSSSRQASPSGTP). S27 is modified (phosphoserine). A compositionally biased stretch (basic and acidic residues) spans 43 to 54 (QKPEKLLAELDR). The segment covering 94 to 105 (SSSGSSDSLGSG) has biased composition (low complexity). GTP is bound by residues 122 to 129 (GESGVGKS), 230 to 233 (NKSD), and 261 to 262 (AA). The disordered stretch occupies residues 282-309 (RGRGHAGGQRPEPSSPDGPAPPTRRESL). A compositionally biased stretch (pro residues) spans 294-303 (PSSPDGPAPP). S296 is modified (phosphoserine).

It belongs to the small GTPase superfamily. RGK family. Expressed in brain and kidney.

It is found in the cell membrane. Binds GTP saturably and exhibits a low intrinsic rate of GTP hydrolysis. The sequence is that of GTP-binding protein REM 2 (Rem2) from Rattus norvegicus (Rat).